The chain runs to 144 residues: UPF0102 protein BMA2801 (144 aa).

Residues 1 to 28 (MCHAREASPGTGEPEAAPRDNFPRAAGS) are disordered.

Belongs to the UPF0102 family.

This chain is UPF0102 protein BMA2801, found in Burkholderia mallei (strain ATCC 23344).